We begin with the raw amino-acid sequence, 459 residues long: Protein FAM90A27P (459 aa).

A compositionally biased stretch (basic residues) spans 1–10; the sequence is MARHSVHHQA. 4 disordered regions span residues 1–41, 74–136, 153–239, and 259–459; these read MARH…ESRV, SHKE…WKEP, HTTK…ALQP, and PDAD…SDSD. Residues 125-136 are compositionally biased toward basic and acidic residues; sequence PQEKMQEAWKEP. Positions 184-194 are enriched in polar residues; that stretch reads HNDSPQLSTCG. Residues 341 to 353 show a composition bias toward low complexity; the sequence is KATAETAATKTAT. Positions 415-427 are enriched in polar residues; sequence PPENSASAQSPRF.

This sequence belongs to the FAM90 family.

This chain is Protein FAM90A27P (FAM90A27P), found in Homo sapiens (Human).